The chain runs to 295 residues: Ribosomal protein L11 methyltransferase (295 aa).

S-adenosyl-L-methionine contacts are provided by threonine 146, glycine 167, aspartate 189, and asparagine 231.

It belongs to the methyltransferase superfamily. PrmA family.

The protein resides in the cytoplasm. The catalysed reaction is L-lysyl-[protein] + 3 S-adenosyl-L-methionine = N(6),N(6),N(6)-trimethyl-L-lysyl-[protein] + 3 S-adenosyl-L-homocysteine + 3 H(+). Functionally, methylates ribosomal protein L11. This is Ribosomal protein L11 methyltransferase from Vibrio parahaemolyticus serotype O3:K6 (strain RIMD 2210633).